The following is a 259-amino-acid chain: Trypsin (259 aa).

The first 32 residues, 1–32 (MKHFLRALKRCSVAVATVAIAVVGLQPVTASA), serve as a signal peptide directing secretion. A propeptide spans 33–36 (APNP) (activation peptide). One can recognise a Peptidase S1 domain in the interval 37 to 257 (VVGGTRAAQG…FASAIASAAR (221 aa)). Residues C58 and C74 are joined by a disulfide bond. Catalysis depends on charge relay system residues H73 and D118. Intrachain disulfides connect C177-C192 and C204-C233. Catalysis depends on S208, which acts as the Charge relay system.

This sequence belongs to the peptidase S1 family.

It catalyses the reaction Preferential cleavage: Arg-|-Xaa, Lys-|-Xaa.. This is Trypsin (sprT) from Streptomyces griseus.